The following is a 363-amino-acid chain: GDP-fucose transporter 1 (363 aa).

8 consecutive transmembrane segments (helical) span residues phenylalanine 33–valine 55, valine 75–cysteine 97, leucine 110–phenylalanine 129, valine 139–leucine 161, serine 166–isoleucine 184, serine 194–isoleucine 213, isoleucine 226–leucine 248, and alanine 263–leucine 285.

The protein belongs to the TPT transporter family. SLC35C subfamily.

Its subcellular location is the golgi apparatus membrane. The enzyme catalyses GMP(out) + GDP-beta-L-fucose(in) = GMP(in) + GDP-beta-L-fucose(out). Antiporter specific for GDP-l-fucose and depending on the concomitant reverse transport of GMP. Involved in GDP-fucose import from the cytoplasm into the Golgi lumen. The sequence is that of GDP-fucose transporter 1 (Slc35c1) from Mus musculus (Mouse).